The chain runs to 693 residues: DNA ligase (693 aa).

NAD(+)-binding positions include 45–49 (DSEYD), 94–95 (SI), and Glu-131. Lys-133 functions as the N6-AMP-lysine intermediate in the catalytic mechanism. Positions 154, 190, 307, and 331 each coordinate NAD(+). 4 residues coordinate Zn(2+): Cys-429, Cys-432, Cys-447, and Cys-453. The BRCT domain occupies 615 to 693 (ASSSKLEGKT…EEGLLSLLAE (79 aa)).

Belongs to the NAD-dependent DNA ligase family. LigA subfamily. Requires Mg(2+) as cofactor. Mn(2+) is required as a cofactor.

The enzyme catalyses NAD(+) + (deoxyribonucleotide)n-3'-hydroxyl + 5'-phospho-(deoxyribonucleotide)m = (deoxyribonucleotide)n+m + AMP + beta-nicotinamide D-nucleotide.. DNA ligase that catalyzes the formation of phosphodiester linkages between 5'-phosphoryl and 3'-hydroxyl groups in double-stranded DNA using NAD as a coenzyme and as the energy source for the reaction. It is essential for DNA replication and repair of damaged DNA. In Methylobacillus flagellatus (strain ATCC 51484 / DSM 6875 / VKM B-1610 / KT), this protein is DNA ligase.